A 620-amino-acid chain; its full sequence is Chaperone protein HscA homolog (620 aa).

It belongs to the heat shock protein 70 family.

Functionally, chaperone involved in the maturation of iron-sulfur cluster-containing proteins. Has a low intrinsic ATPase activity which is markedly stimulated by HscB. This Shewanella putrefaciens (strain CN-32 / ATCC BAA-453) protein is Chaperone protein HscA homolog.